The following is a 102-amino-acid chain: NADH-quinone oxidoreductase subunit K 2 (102 aa).

The next 3 membrane-spanning stretches (helical) occupy residues 1–21, 30–50, and 65–85; these read MIVP…LGLV, IIMM…AFVG, and LMIM…VVYL.

The protein belongs to the complex I subunit 4L family. NDH-1 is composed of 14 different subunits. Subunits NuoA, H, J, K, L, M, N constitute the membrane sector of the complex.

It is found in the cell inner membrane. It carries out the reaction a quinone + NADH + 5 H(+)(in) = a quinol + NAD(+) + 4 H(+)(out). NDH-1 shuttles electrons from NADH, via FMN and iron-sulfur (Fe-S) centers, to quinones in the respiratory chain. The immediate electron acceptor for the enzyme in this species is believed to be ubiquinone. Couples the redox reaction to proton translocation (for every two electrons transferred, four hydrogen ions are translocated across the cytoplasmic membrane), and thus conserves the redox energy in a proton gradient. The polypeptide is NADH-quinone oxidoreductase subunit K 2 (Geotalea daltonii (strain DSM 22248 / JCM 15807 / FRC-32) (Geobacter daltonii)).